The primary structure comprises 188 residues: Pyridoxal 5'-phosphate synthase subunit PdxT (188 aa).

Residue 46-48 (GES) participates in L-glutamine binding. The active-site Nucleophile is the Cys78. L-glutamine is bound by residues Arg105 and 134–135 (IR). Catalysis depends on charge relay system residues His170 and Glu172.

It belongs to the glutaminase PdxT/SNO family. As to quaternary structure, in the presence of PdxS, forms a dodecamer of heterodimers. Only shows activity in the heterodimer.

The catalysed reaction is aldehydo-D-ribose 5-phosphate + D-glyceraldehyde 3-phosphate + L-glutamine = pyridoxal 5'-phosphate + L-glutamate + phosphate + 3 H2O + H(+). It carries out the reaction L-glutamine + H2O = L-glutamate + NH4(+). It participates in cofactor biosynthesis; pyridoxal 5'-phosphate biosynthesis. Its function is as follows. Catalyzes the hydrolysis of glutamine to glutamate and ammonia as part of the biosynthesis of pyridoxal 5'-phosphate. The resulting ammonia molecule is channeled to the active site of PdxS. This is Pyridoxal 5'-phosphate synthase subunit PdxT from Desulforamulus reducens (strain ATCC BAA-1160 / DSM 100696 / MI-1) (Desulfotomaculum reducens).